An 826-amino-acid polypeptide reads, in one-letter code: Leucine--tRNA ligase (826 aa).

Positions 42–52 match the 'HIGH' region motif; that stretch reads PYPSGNLHMGH. The short motif at 581-585 is the 'KMSKS' region element; the sequence is KMSKS. Residue K584 participates in ATP binding.

It belongs to the class-I aminoacyl-tRNA synthetase family.

Its subcellular location is the cytoplasm. It carries out the reaction tRNA(Leu) + L-leucine + ATP = L-leucyl-tRNA(Leu) + AMP + diphosphate. The chain is Leucine--tRNA ligase from Desulforudis audaxviator (strain MP104C).